Consider the following 991-residue polypeptide: Seizure protein 6 (991 aa).

The signal sequence occupies residues M1–G19. The Extracellular segment spans residues L20–H922. The segment at E79 to P193 is disordered. Residues T119 to P132 are compositionally biased toward low complexity. A compositionally biased stretch (polar residues) spans P175 to Q184. A disulfide bond links C241 and C268. One can recognise a CUB 1 domain in the interval C241–S353. N-linked (GlcNAc...) asparagine glycosylation occurs at N286. A Sushi 1 domain is found at L352–A411. 12 cysteine pairs are disulfide-bonded: C354/C394, C380/C409, C413/C440, C529/C571, C556/C586, C590/C616, C707/C749, C735/C762, C768/C810, C796/C827, C835/C877, and C863/C892. Residues N396, N433, and N538 are each glycosylated (N-linked (GlcNAc...) asparagine). In terms of domain architecture, CUB 2 spans C413–F524. The Sushi 2 domain maps to G527 to A588. Residues C590–V701 form the CUB 3 domain. Sushi domains lie at D705–R764, T766–L829, and K833–A894. Residues L923–L943 traverse the membrane as a helical segment. Residues Y944–I991 are Cytoplasmic-facing.

Belongs to the SEZ6 family. In terms of processing, glycosylated. As to expression, brain-specific. Expressed in extrasynaptic and synaptic subcellular fractions (at protein level). Expression correlates with the most active periods of cortical neurogenesis and neuronal maturation. Expression is restricted to the gray matter with higher levels in the forebrain including the olfactory bulb, anterior olfactory nuclei, olfactory tubercle, striatum, hippocampal CA1 pyramidal cell layer and cerebral cortex. Expression is up-regulated with the convulsant drug, pentylenetetrazole.

It is found in the cell membrane. Its subcellular location is the cell projection. The protein resides in the dendrite. The protein localises to the synapse. It localises to the secreted. It is found in the cytoplasm. Functionally, may play a role in cell-cell recognition and in neuronal membrane signaling. Seems to be important for the achievement of the necessary balance between dendrite elongation and branching during the elaboration of a complex dendritic arbor. Involved in the development of appropriate excitatory synaptic connectivity. The chain is Seizure protein 6 (Sez6) from Mus musculus (Mouse).